The chain runs to 430 residues: MTRSEALFEQAKKTIPGGVNSPVRAFNGVGGSPLFIEKADGAYIYDADGKAYIDYVGSWGPMILGHNHPKIREAVLAAVHNGLSFGAPTELEVQMAEKVIAMVPSIEQVRMVSSGTEATMSAIRLARGFTNRDKILKFEGCYHGHADCLLVKAGSGALTLGQPSSPGIPEDFAKHTLTAVYNDLDSVRTLFEQYPTEIACIIIEPVAGNMNCIPPIPGFLKGLRTMCDEFGALLIIDEVMTGFRVSRSGAQGHYGVTPDLTTLGKVIGGGMPVGAFGGRKEVMQFIAPTGPVYQAGTLSGNPIAMSAGLAQMEALCEEGLYEALSAKTKRIAEGFKAAADKHGIPMAINYVGGMFGFFFTEQEQITRFDQVTKCNIEHFRTFYHGMLDEGVYLAPSAYEAGFLSMAHGEEELRLTLEAADRVLARMKAAM.

At Lys265 the chain carries N6-(pyridoxal phosphate)lysine.

It belongs to the class-III pyridoxal-phosphate-dependent aminotransferase family. HemL subfamily. In terms of assembly, homodimer. Pyridoxal 5'-phosphate is required as a cofactor.

The protein resides in the cytoplasm. The catalysed reaction is (S)-4-amino-5-oxopentanoate = 5-aminolevulinate. The protein operates within porphyrin-containing compound metabolism; protoporphyrin-IX biosynthesis; 5-aminolevulinate from L-glutamyl-tRNA(Glu): step 2/2. In Shewanella sp. (strain MR-7), this protein is Glutamate-1-semialdehyde 2,1-aminomutase.